The following is a 92-amino-acid chain: MKVSTAALAVLLCTMALWNEVFSAPYGADTPTACCFSYGRQIPRKFIADYFETSSLCSQPGVIFLTKRNRQICADPKETWVQEYITELELNA.

The first 23 residues, 1–23 (MKVSTAALAVLLCTMALWNEVFS), serve as a signal peptide directing secretion. Cystine bridges form between Cys-34–Cys-57 and Cys-35–Cys-73.

The protein belongs to the intercrine beta (chemokine CC) family. As to quaternary structure, self-associates. Also heterodimer of MIP-1-alpha(4-69) and MIP-1-beta(3-69). Interacts with CCR1.

It is found in the secreted. In terms of biological role, monokine with inflammatory and chemokinetic properties. Binds to CCR1, CCR4 and CCR5. One of the major HIV-suppressive factors produced by CD8+ T-cells. Recombinant MIP-1-alpha induces a dose-dependent inhibition of different strains of HIV-1, HIV-2, and simian immunodeficiency virus (SIV). The chain is C-C motif chemokine 3 (Ccl3) from Rattus norvegicus (Rat).